Reading from the N-terminus, the 405-residue chain is uncharacterized protein (405 aa).

Residues Met1–Arg18 are Cytoplasmic-facing. A helical transmembrane segment spans residues Ile19 to Val39. At Leu40–Asp46 the chain is on the periplasmic side. A helical transmembrane segment spans residues Val47–Leu67. Topologically, residues Leu68 to Lys84 are cytoplasmic. The chain crosses the membrane as a helical span at residues Ile85–Leu105. Residue Thr106 is a topological domain, periplasmic. A helical transmembrane segment spans residues Ala107–Gly127. Residues Gln128–Asn155 lie on the Cytoplasmic side of the membrane. The helical transmembrane segment at Gly156–Trp176 threads the bilayer. Gly177 is a topological domain (periplasmic). A helical membrane pass occupies residues Gly178–Ile198. The Cytoplasmic portion of the chain corresponds to Pro199–Tyr223. Residues Gly224–Phe244 traverse the membrane as a helical segment. Residues Tyr245–Asp251 are Periplasmic-facing. A helical membrane pass occupies residues Gly252–Pro272. Over Asn273 to Asn282 the chain is Cytoplasmic. A helical membrane pass occupies residues Val283–Met303. Over Pro304–Lys308 the chain is Periplasmic. A helical membrane pass occupies residues Ile309–Ala329. Residues Val330–Ala343 lie on the Cytoplasmic side of the membrane. Residues Thr344 to Met364 form a helical membrane-spanning segment. A topological domain (periplasmic) is located at residue Ser365. Residues Trp366–Leu386 traverse the membrane as a helical segment. Over Thr387 to Ser405 the chain is Cytoplasmic.

It belongs to the major facilitator superfamily. YhhS family.

Its subcellular location is the cell inner membrane. In terms of biological role, confers high-level resistance to glyphosate when overexpressed. Overexpression has no effect on intracellular arabinose concentrations. This is an uncharacterized protein from Escherichia coli (strain K12).